Consider the following 242-residue polypeptide: Type III pantothenate kinase (242 aa).

6 to 13 (DIGNSVAK) serves as a coordination point for ATP. Residues Tyr-86 and 93–96 (GMDR) contribute to the substrate site. Asp-95 acts as the Proton acceptor in catalysis. A K(+)-binding site is contributed by Asp-116. Thr-119 contributes to the ATP binding site. Thr-171 contacts substrate.

The protein belongs to the type III pantothenate kinase family. As to quaternary structure, homodimer. The cofactor is NH4(+). Requires K(+) as cofactor.

The protein localises to the cytoplasm. The enzyme catalyses (R)-pantothenate + ATP = (R)-4'-phosphopantothenate + ADP + H(+). It participates in cofactor biosynthesis; coenzyme A biosynthesis; CoA from (R)-pantothenate: step 1/5. Functionally, catalyzes the phosphorylation of pantothenate (Pan), the first step in CoA biosynthesis. This Phocaeicola vulgatus (strain ATCC 8482 / DSM 1447 / JCM 5826 / CCUG 4940 / NBRC 14291 / NCTC 11154) (Bacteroides vulgatus) protein is Type III pantothenate kinase.